The sequence spans 163 residues: Beta-lactoglobulin-2 (163 aa).

Intrachain disulfides connect Cys-66/Cys-161 and Cys-106/Cys-120.

It belongs to the calycin superfamily. Lipocalin family. Monomer.

The protein localises to the secreted. Its function is as follows. Lactoglobulin is the primary component of whey, it binds retinol and is probably involved in the transport of that molecule. This chain is Beta-lactoglobulin-2 (LGB2), found in Felis catus (Cat).